We begin with the raw amino-acid sequence, 115 residues long: DNA-directed RNA polymerase II subunit RPB11-b2 (115 aa).

This sequence belongs to the archaeal Rpo11/eukaryotic RPB11/RPC19 RNA polymerase subunit family. As to quaternary structure, component of the RNA polymerase II (Pol II) complex consisting of 12 subunits.

The protein localises to the nucleus. In terms of biological role, DNA-dependent RNA polymerase catalyzes the transcription of DNA into RNA using the four ribonucleoside triphosphates as substrates. Component of RNA polymerase II which synthesizes mRNA precursors and many functional non-coding RNAs. Pol II is the central component of the basal RNA polymerase II transcription machinery. It is composed of mobile elements that move relative to each other. RPB11 is part of the core element with the central large cleft. This Homo sapiens (Human) protein is DNA-directed RNA polymerase II subunit RPB11-b2 (POLR2J3).